The primary structure comprises 205 residues: MDPFLVLLHSLSGSLSGNDLMELKFLCRERVSKRKLERVQSGLDLFTVLLEQNDLERGHTGLLRELLASLRRHDLLQRLDDFEAGTATAAPPGEADLQVAFDIVCDNVGRDWKRLARELKVSEAKMDGIEEKYPRSLSERVRESLKVWKNAEKKNASVAGLVKALRTCRLNLVADLVEEAQESVSKSENMSPVLRDSTVSSSETP.

The region spanning 3–81 (PFLVLLHSLS…RHDLLQRLDD (79 aa)) is the DED domain. Residues 97 to 181 (LQVAFDIVCD…LVADLVEEAQ (85 aa)) enclose the Death domain. The segment at 181 to 205 (QESVSKSENMSPVLRDSTVSSSETP) is disordered. Residue serine 191 is modified to Phosphoserine.

Can self-associate. Component of the AIM2 PANoptosome complex, a multiprotein complex that drives inflammatory cell death (PANoptosis). Component of the death-induced signaling complex (DISC) composed of cell surface receptor FAS/CD95 or TNFRSF1A, adapter protein FADD and the CASP8 protease; recruitment of CASP8 to the complex is required for processing of CASP8 into the p18 and p10 subunits. Interacts (via death domain) with FAS (via death domain). Interacts directly (via DED domain) with NOL3 (via CARD domain); inhibits death-inducing signaling complex (DISC) assembly by inhibiting the increase in FAS-FADD binding induced by FAS activation. Interacts with CFLAR, PEA15 and MBD4. When phosphorylated, part of a complex containing HIPK3 and FAS. May interact with MAVS/IPS1. Interacts with MOCV v-CFLAR protein and PIDD1. Interacts with RIPK1 and TRADD. Interacts with stimulated TNFRSF10B. Interacts with DDX24.

It is found in the cytoplasm. Its function is as follows. Apoptotic adapter molecule that recruits caspases CASP8 or CASP10 to the activated FAS/CD95 or TNFRSF1A/TNFR-1 receptors. The resulting aggregate called the death-inducing signaling complex (DISC) performs CASP8 proteolytic activation. Active CASP8 initiates the subsequent cascade of caspases mediating apoptosis. Involved in interferon-mediated antiviral immune response, playing a role in the positive regulation of interferon signaling. In Mus musculus (Mouse), this protein is FAS-associated death domain protein.